Consider the following 302-residue polypeptide: Probable 2-(5''-triphosphoribosyl)-3'-dephosphocoenzyme-A synthase (302 aa).

The protein belongs to the CitG/MdcB family.

The catalysed reaction is 3'-dephospho-CoA + ATP = 2'-(5''-triphospho-alpha-D-ribosyl)-3'-dephospho-CoA + adenine. The sequence is that of Probable 2-(5''-triphosphoribosyl)-3'-dephosphocoenzyme-A synthase from Citrobacter koseri (strain ATCC BAA-895 / CDC 4225-83 / SGSC4696).